Reading from the N-terminus, the 104-residue chain is Secretoglobin family 3A member 1 (104 aa).

Residues 1–20 (MKLAALLGLCVALSCSSAAA) form the signal peptide.

It belongs to the secretoglobin family. UGRP subfamily. As to quaternary structure, homodimer; disulfide-linked. As to expression, highly expressed in lung and prostate. Also found in mammary gland, spleen, pancreas, testis and liver. Detected throughout the airway epithelium in lung, with highest expression in large airways. Found in lung submucosal glands where it localizes to acinar and ductile cells. Not detected in respiratory bronchioles, alveolar ducts or alveolar epithelium. In mammary gland, specifically localizes to luminal epithelial cells.

It localises to the secreted. Its function is as follows. Secreted cytokine-like protein. Inhibits cell growth in vitro. This Homo sapiens (Human) protein is Secretoglobin family 3A member 1 (SCGB3A1).